The primary structure comprises 142 residues: Mitochondrial import receptor subunit TOM22 homolog (142 aa).

The segment covering M1–E18 has biased composition (low complexity). Positions M1–D41 are disordered. An N-acetylalanine modification is found at A2. Topologically, residues A2–A83 are cytoplasmic. Residue S15 is modified to Phosphoserine. Residues K27 to D41 are compositionally biased toward acidic residues. Positions D41–G50 are import sequence; necessary for mitochondrion outer membrane localization and integration in the TOM complex. T43 is modified (phosphothreonine). Residue S45 is modified to Phosphoserine. Residues A83–T103 form a TMD; necessary for mitochondrion outer membrane localization and integration in the TOM complex region. Residues A84–T103 form a helical membrane-spanning segment. Residues E104–M142 are Mitochondrial intermembrane-facing. The C-tail signal; necessary for mitochondrion outer membrane localization and integration in the TOM complex stretch occupies residues P123–M142.

Belongs to the Tom22 family. As to quaternary structure, forms part of the preprotein translocase complex of the outer mitochondrial membrane (TOM complex) which consists of at least 7 different proteins (TOMM5, TOMM6, TOMM7, TOMM20, TOMM22, TOMM40 and TOMM70). Interacts with PPP2R2B and TOMM40.

It is found in the mitochondrion outer membrane. In terms of biological role, central receptor component of the translocase of the outer membrane of mitochondria (TOM complex) responsible for the recognition and translocation of cytosolically synthesized mitochondrial preproteins. Together with the peripheral receptor TOM20 functions as the transit peptide receptor and facilitates the movement of preproteins into the translocation pore. Required for the translocation across the mitochondrial outer membrane of cytochrome P450 monooxygenases. In Mus musculus (Mouse), this protein is Mitochondrial import receptor subunit TOM22 homolog (Tomm22).